The sequence spans 197 residues: Recombination protein RecR (197 aa).

The C4-type zinc-finger motif lies at 56–71 (CKRCGSYAETEICNIC). The Toprim domain occupies 79–174 (HTFCVVEQPE…DVTRIAYGIT (96 aa)).

The protein belongs to the RecR family.

Its function is as follows. May play a role in DNA repair. It seems to be involved in an RecBC-independent recombinational process of DNA repair. It may act with RecF and RecO. The sequence is that of Recombination protein RecR from Leptospira borgpetersenii serovar Hardjo-bovis (strain JB197).